The following is a 314-amino-acid chain: 1,4-dihydroxy-2-naphthoyl-CoA synthase (314 aa).

Substrate-binding positions include Arg58, 103–107, Tyr115, 157–161, Thr184, Ser190, Tyr287, and Lys302; these read SGGDQ and WAAGG.

Belongs to the enoyl-CoA hydratase/isomerase family. MenB subfamily.

It catalyses the reaction 2-succinylbenzoyl-CoA + H(+) = 1,4-dihydroxy-2-naphthoyl-CoA + H2O. It participates in quinol/quinone metabolism; 1,4-dihydroxy-2-naphthoate biosynthesis; 1,4-dihydroxy-2-naphthoate from chorismate: step 6/7. It functions in the pathway quinol/quinone metabolism; menaquinone biosynthesis. Functionally, converts o-succinylbenzoyl-CoA (OSB-CoA) to 1,4-dihydroxy-2-naphthoyl-CoA (DHNA-CoA). The polypeptide is 1,4-dihydroxy-2-naphthoyl-CoA synthase (Mycobacterium tuberculosis (strain CDC 1551 / Oshkosh)).